A 237-amino-acid polypeptide reads, in one-letter code: Ribonuclease PH (237 aa).

Phosphate-binding positions include Arg-86 and 124–126 (GTR).

The protein belongs to the RNase PH family. As to quaternary structure, homohexameric ring arranged as a trimer of dimers.

The catalysed reaction is tRNA(n+1) + phosphate = tRNA(n) + a ribonucleoside 5'-diphosphate. Its function is as follows. Phosphorolytic 3'-5' exoribonuclease that plays an important role in tRNA 3'-end maturation. Removes nucleotide residues following the 3'-CCA terminus of tRNAs; can also add nucleotides to the ends of RNA molecules by using nucleoside diphosphates as substrates, but this may not be physiologically important. Probably plays a role in initiation of 16S rRNA degradation (leading to ribosome degradation) during starvation. The chain is Ribonuclease PH from Shewanella sediminis (strain HAW-EB3).